A 283-amino-acid chain; its full sequence is Formamidopyrimidine-DNA glycosylase (283 aa).

Catalysis depends on P2, which acts as the Schiff-base intermediate with DNA. E3 functions as the Proton donor in the catalytic mechanism. The Proton donor; for beta-elimination activity role is filled by K60. Residues H95, R114, and R159 each contribute to the DNA site. The segment at 244–278 (WVYGRHNQPCRVCGTPIERIKLGGRSSHFCPQCQP) adopts an FPG-type zinc-finger fold. R268 acts as the Proton donor; for delta-elimination activity in catalysis.

It belongs to the FPG family. In terms of assembly, monomer. Zn(2+) is required as a cofactor.

It catalyses the reaction Hydrolysis of DNA containing ring-opened 7-methylguanine residues, releasing 2,6-diamino-4-hydroxy-5-(N-methyl)formamidopyrimidine.. The catalysed reaction is 2'-deoxyribonucleotide-(2'-deoxyribose 5'-phosphate)-2'-deoxyribonucleotide-DNA = a 3'-end 2'-deoxyribonucleotide-(2,3-dehydro-2,3-deoxyribose 5'-phosphate)-DNA + a 5'-end 5'-phospho-2'-deoxyribonucleoside-DNA + H(+). Its function is as follows. Involved in base excision repair of DNA damaged by oxidation or by mutagenic agents. Acts as a DNA glycosylase that recognizes and removes damaged bases. Has a preference for oxidized purines, such as 7,8-dihydro-8-oxoguanine (8-oxoG). Has AP (apurinic/apyrimidinic) lyase activity and introduces nicks in the DNA strand. Cleaves the DNA backbone by beta-delta elimination to generate a single-strand break at the site of the removed base with both 3'- and 5'-phosphates. This chain is Formamidopyrimidine-DNA glycosylase, found in Crocosphaera subtropica (strain ATCC 51142 / BH68) (Cyanothece sp. (strain ATCC 51142)).